The following is a 115-amino-acid chain: Large ribosomal subunit protein bL19 (115 aa).

Belongs to the bacterial ribosomal protein bL19 family.

Functionally, this protein is located at the 30S-50S ribosomal subunit interface and may play a role in the structure and function of the aminoacyl-tRNA binding site. The protein is Large ribosomal subunit protein bL19 of Lactobacillus delbrueckii subsp. bulgaricus (strain ATCC BAA-365 / Lb-18).